The following is a 1186-amino-acid chain: DNA-directed RNA polymerase subunit beta (1186 aa).

A disordered region spans residues 1149–1186 (KEEDDDPSTSSDDLGFNIGARPDAAAKEDQVAEEPEFQ).

This sequence belongs to the RNA polymerase beta chain family. In terms of assembly, the RNAP catalytic core consists of 2 alpha, 1 beta, 1 beta' and 1 omega subunit. When a sigma factor is associated with the core the holoenzyme is formed, which can initiate transcription.

It carries out the reaction RNA(n) + a ribonucleoside 5'-triphosphate = RNA(n+1) + diphosphate. DNA-dependent RNA polymerase catalyzes the transcription of DNA into RNA using the four ribonucleoside triphosphates as substrates. This Bifidobacterium adolescentis (strain ATCC 15703 / DSM 20083 / NCTC 11814 / E194a) protein is DNA-directed RNA polymerase subunit beta.